The sequence spans 812 residues: DNA replication licensing factor MCM3 (812 aa).

The residue at position 2 (alanine 2) is an N-acetylalanine. A Phosphoserine modification is found at serine 160. At lysine 293 the chain carries N6-acetyllysine. One can recognise an MCM domain in the interval 295 to 502; the sequence is VFEQLARSLA…QDREISDHVL (208 aa). 5 residues coordinate ADP: glutamine 353, leucine 393, glutamate 394, alanine 395, and alanine 397. An Arginine finger motif is present at residues 477 to 480; it reads SRFD. An N6-acetyllysine modification is found at lysine 547. Serine 611 is modified (phosphoserine). Position 664 (arginine 664) interacts with ATP. The disordered stretch occupies residues 664-744; sequence RKKASEDESD…TQDSQKVELS (81 aa). A phosphoserine mark is found at serine 668, serine 672, and serine 681. Over residues 670-681 the composition is skewed to acidic residues; the sequence is DESDLEDEEEKS. Tyrosine 705 carries the phosphotyrosine modification. Serine 708 bears the Phosphoserine mark. Threonine 719, threonine 722, and threonine 729 each carry phosphothreonine. Residues 720–744 are compositionally biased toward basic and acidic residues; that stretch reads PKTDDSQEKTDDSQETQDSQKVELS. Phosphoserine occurs at positions 732 and 738.

It belongs to the MCM family. Component of the MCM2-7 complex. The complex forms a toroidal hexameric ring with the proposed subunit order MCM2-MCM6-MCM4-MCM7-MCM3-MCM5. Component of the CMG helicase complex, a hexameric ring of related MCM2-7 subunits stabilized by CDC45 and the tetrameric GINS complex. Associated with the replication-specific DNA polymerase alpha. Interacts with MCMBP. Interacts with ANKRD17. Interacts with MCM3AP; this interaction leads to MCM3 acetylation. Acetylated by MCM3AP. In terms of processing, O-glycosylated (O-GlcNAcylated), in a cell cycle-dependent manner.

Its subcellular location is the nucleus. The protein resides in the chromosome. The enzyme catalyses ATP + H2O = ADP + phosphate + H(+). Acts as a component of the MCM2-7 complex (MCM complex) which is the replicative helicase essential for 'once per cell cycle' DNA replication initiation and elongation in eukaryotic cells. Core component of CDC45-MCM-GINS (CMG) helicase, the molecular machine that unwinds template DNA during replication, and around which the replisome is built. The active ATPase sites in the MCM2-7 ring are formed through the interaction surfaces of two neighboring subunits such that a critical structure of a conserved arginine finger motif is provided in trans relative to the ATP-binding site of the Walker A box of the adjacent subunit. The six ATPase active sites, however, are likely to contribute differentially to the complex helicase activity. Required for the entry in S phase and for cell division. In Mus musculus (Mouse), this protein is DNA replication licensing factor MCM3 (Mcm3).